A 156-amino-acid polypeptide reads, in one-letter code: S-ribosylhomocysteine lyase (156 aa).

Positions 56, 60, and 123 each coordinate Fe cation.

This sequence belongs to the LuxS family. Homodimer. It depends on Fe cation as a cofactor.

It catalyses the reaction S-(5-deoxy-D-ribos-5-yl)-L-homocysteine = (S)-4,5-dihydroxypentane-2,3-dione + L-homocysteine. Involved in the synthesis of autoinducer 2 (AI-2) which is secreted by bacteria and is used to communicate both the cell density and the metabolic potential of the environment. The regulation of gene expression in response to changes in cell density is called quorum sensing. Catalyzes the transformation of S-ribosylhomocysteine (RHC) to homocysteine (HC) and 4,5-dihydroxy-2,3-pentadione (DPD). This chain is S-ribosylhomocysteine lyase, found in Staphylococcus aureus (strain bovine RF122 / ET3-1).